A 243-amino-acid polypeptide reads, in one-letter code: MEQGSGRLEDFPVNVFSVTPYTPSTADIQVSDDDKAGATLLFSGIFLGLVGITFTVMGWIKYQGVSHFEWTQLLGPVLLSVGVTFILIAVCKFKMLSCQLCKESEERVPDSEQTPGGPSFVFTGINQPITFHGATVVQYIPPPYGSPEPMGINTSYLQSVVSPCGLITSGGAAAAMSSPPQYYTIYPQDNSAFVVDEGCLSFTDGGNHRPNPDVDQLEETQLEEEACACFSPPPYEEIYSLPR.

Helical transmembrane passes span 40 to 60 and 73 to 93; these read LLFS…MGWI and LLGP…VCKF.

Interacts with SLC34A1; regulates SLC34A1 internalization by PTH and FGF23. As to expression, predominantly expressed in kidney. Selectively localized in the apical membrane of renal proximal tubule epithelial cells.

It localises to the endoplasmic reticulum membrane. The protein resides in the apical cell membrane. Its function is as follows. Regulator of plasma phosphate homeostasis. Decreases serum inorganic phosphate (Pi) uptake by regulating the sodium-phosphate cotransporter SLC34A1 trafficking by PTH and FGF23 in the kidney. This Homo sapiens (Human) protein is Transmembrane protein 174 (TMEM174).